The primary structure comprises 724 residues: Phosphoribosylformylglycinamidine synthase subunit PurL (724 aa).

H34 is an active-site residue. ATP contacts are provided by Y37 and K75. E77 lines the Mg(2+) pocket. Substrate-binding positions include 78–81 (SHNH) and R100. H79 serves as the catalytic Proton acceptor. D101 serves as a coordination point for Mg(2+). A substrate-binding site is contributed by Q221. D249 contacts Mg(2+). 292 to 294 (ESQ) contacts substrate. D478 and G515 together coordinate ATP. S518 is a binding site for substrate.

It belongs to the FGAMS family. In terms of assembly, monomer. Part of the FGAM synthase complex composed of 1 PurL, 1 PurQ and 2 PurS subunits.

It is found in the cytoplasm. The enzyme catalyses N(2)-formyl-N(1)-(5-phospho-beta-D-ribosyl)glycinamide + L-glutamine + ATP + H2O = 2-formamido-N(1)-(5-O-phospho-beta-D-ribosyl)acetamidine + L-glutamate + ADP + phosphate + H(+). It functions in the pathway purine metabolism; IMP biosynthesis via de novo pathway; 5-amino-1-(5-phospho-D-ribosyl)imidazole from N(2)-formyl-N(1)-(5-phospho-D-ribosyl)glycinamide: step 1/2. Functionally, part of the phosphoribosylformylglycinamidine synthase complex involved in the purines biosynthetic pathway. Catalyzes the ATP-dependent conversion of formylglycinamide ribonucleotide (FGAR) and glutamine to yield formylglycinamidine ribonucleotide (FGAM) and glutamate. The FGAM synthase complex is composed of three subunits. PurQ produces an ammonia molecule by converting glutamine to glutamate. PurL transfers the ammonia molecule to FGAR to form FGAM in an ATP-dependent manner. PurS interacts with PurQ and PurL and is thought to assist in the transfer of the ammonia molecule from PurQ to PurL. This Caldivirga maquilingensis (strain ATCC 700844 / DSM 13496 / JCM 10307 / IC-167) protein is Phosphoribosylformylglycinamidine synthase subunit PurL.